Reading from the N-terminus, the 317-residue chain is MSFSSKVKSEVCRYDDYSKGEAIAVLSAVMKASGTLALEGNRKISFKIITENPAIARLIFKLLKKYFDIHTEIMMKKSNSLKKNNVYVVSITEDMGVRELLKTVGVMKNEDGIVTLSYDIPEFVVKDDESRKMYIRGAFLGGGSVSNPEKMYHLEFVTHNEDYASNLRDLINTYGLNSKVIQRKNSYVVYIKEGEQVVDLLNIIGAHSSLLELENIRIIKEMRNNINRLVNCETANLSKTVNASVRQIESIKLIEKQIGLSRLPENLREVAKLRLNYPDESLKELGKMLEPPVGKSGVNHRLRKIEKIAEELRKEGR.

Residues 281–314 constitute a DNA-binding region (H-T-H motif); that stretch reads SLKELGKMLEPPVGKSGVNHRLRKIEKIAEELRK.

This sequence belongs to the WhiA family.

Functionally, involved in cell division and chromosome segregation. The chain is Probable cell division protein WhiA from Clostridium acetobutylicum (strain ATCC 824 / DSM 792 / JCM 1419 / IAM 19013 / LMG 5710 / NBRC 13948 / NRRL B-527 / VKM B-1787 / 2291 / W).